Consider the following 178-residue polypeptide: ATP synthase subunit delta (178 aa).

This sequence belongs to the ATPase delta chain family. As to quaternary structure, F-type ATPases have 2 components, F(1) - the catalytic core - and F(0) - the membrane proton channel. F(1) has five subunits: alpha(3), beta(3), gamma(1), delta(1), epsilon(1). F(0) has three main subunits: a(1), b(2) and c(10-14). The alpha and beta chains form an alternating ring which encloses part of the gamma chain. F(1) is attached to F(0) by a central stalk formed by the gamma and epsilon chains, while a peripheral stalk is formed by the delta and b chains.

It localises to the cell inner membrane. Functionally, f(1)F(0) ATP synthase produces ATP from ADP in the presence of a proton or sodium gradient. F-type ATPases consist of two structural domains, F(1) containing the extramembraneous catalytic core and F(0) containing the membrane proton channel, linked together by a central stalk and a peripheral stalk. During catalysis, ATP synthesis in the catalytic domain of F(1) is coupled via a rotary mechanism of the central stalk subunits to proton translocation. This protein is part of the stalk that links CF(0) to CF(1). It either transmits conformational changes from CF(0) to CF(1) or is implicated in proton conduction. The polypeptide is ATP synthase subunit delta (Pseudomonas entomophila (strain L48)).